Consider the following 515-residue polypeptide: Vesicular acetylcholine transporter (515 aa).

Topologically, residues 1–40 (MGVTMAVGLAKAAMGKISSAIGERSKRISGAMNEPRRKRK) are cytoplasmic. Residues 41-61 (ILLVIVCIAMLLDNMLYMVIV) form a helical membrane-spanning segment. At 62–112 (PIIPNYLETIRTYKLVYITTPSNGTNGSLLNSTQRAVLERNPNANEDIQIG) the chain is on the lumenal, vesicle side. 3 N-linked (GlcNAc...) asparagine glycosylation sites follow: Asn-84, Asn-87, and Asn-92. A helical membrane pass occupies residues 113-133 (VLFASKAILQLLSNPFTGTFI). The Cytoplasmic portion of the chain corresponds to 134 to 139 (DRVGYD). The helical transmembrane segment at 140 to 160 (IPLLIGLTIMFFSTITFAFGE) threads the bilayer. The Lumenal, vesicle portion of the chain corresponds to 161 to 169 (SYAVLFAAR). A helical membrane pass occupies residues 170-190 (SLQGLGSAFADTSGIAMIADK). Over 191–201 (YTEESERTQAL) the chain is Cytoplasmic. Residues 202-222 (GIALAFISFGSLVAPPFGGVL) traverse the membrane as a helical segment. At 223–229 (YQFAGKW) the chain is on the lumenal, vesicle side. Residues 230 to 250 (VPFLVLSFVCLLDGILLLMVV) traverse the membrane as a helical segment. Topologically, residues 251–271 (TPFASRTRENMLQGTPIYKLM) are cytoplasmic. A helical transmembrane segment spans residues 272 to 292 (IDPYIAVVAGALTTCNIPLAF). The Lumenal, vesicle segment spans residues 293–310 (LEPTISNWMKKTMNASEW). A glycan (N-linked (GlcNAc...) asparagine) is linked at Asn-306. The chain crosses the membrane as a helical span at residues 311–331 (QMGITWLPAFFPHILGVYITV). Topologically, residues 332–341 (KLAAKYPNYQ) are cytoplasmic. Residues 342–362 (WFYGAVGLVIIGASSCTIPAC) form a helical membrane-spanning segment. At 363–367 (RNFEE) the chain is on the lumenal, vesicle side. Residues 368-388 (LIIPLCALCFGIALVDTALLP) traverse the membrane as a helical segment. The Cytoplasmic portion of the chain corresponds to 389–404 (TLAFLVDIRYVSVYGS). A helical transmembrane segment spans residues 405-425 (VYAIADISYSVAYALGPIMAG). Residues 426–432 (QIVHDLG) lie on the Lumenal, vesicle side of the membrane. A helical membrane pass occupies residues 433–453 (FVQLNLGMGLVNILYAPALLF). At 454–515 (LRNVCQMKPS…VLSDQEGYSE (62 aa)) the chain is on the cytoplasmic side. The disordered stretch occupies residues 489–515 (AAKEPHGSSSGNHSVHAVLSDQEGYSE).

The protein belongs to the major facilitator superfamily. Vesicular transporter family. As to expression, electric lobe.

The protein localises to the membrane. In terms of biological role, involved in acetylcholine transport into synaptic vesicles. This is Vesicular acetylcholine transporter from Tetronarce californica (Pacific electric ray).